Here is a 456-residue protein sequence, read N- to C-terminus: Phospholipase A1 member A (456 aa).

A signal peptide spans 1–25 (MPPDFWERCFWLWGLLLWLSVGSTG). Asn34 carries N-linked (GlcNAc...) asparagine glycosylation. Catalysis depends on Ser166, which acts as the Nucleophile. Residue Asp190 is the Charge relay system of the active site. Cys245 and Cys258 form a disulfide bridge. His260 serves as the catalytic Charge relay system. Cystine bridges form between Cys282-Cys293 and Cys296-Cys304.

Belongs to the AB hydrolase superfamily. Lipase family.

It is found in the secreted. The catalysed reaction is a 1,2-diacyl-sn-glycero-3-phospho-L-serine + H2O = a 2-acyl-sn-glycero-3-phospho-L-serine + a fatty acid + H(+). The enzyme catalyses 1,2-di-(9Z)-octadecenoyl-sn-glycero-3-phospho-L-serine + H2O = 2-(9Z-octadecenoyl)-sn-glycero-3-phospho-L-serine + (9Z)-octadecenoate + H(+). It catalyses the reaction 1-hexadecanoyl-2-(5Z,8Z,11Z,14Z-eicosatetraenoyl)-sn-glycero-3-phospho-L-serine + H2O = 2-(5Z,8Z,11Z,14Z)-eicosatetraenoyl-sn-glycero-3-phospho-L-serine + hexadecanoate + H(+). It carries out the reaction a 1-acyl-sn-glycero-3-phospho-L-serine + H2O = sn-glycero-3-phospho-L-serine + a fatty acid + H(+). The catalysed reaction is 1-(9Z-octadecenoyl)-sn-glycero-3-phospho-L-serine + H2O = sn-glycero-3-phospho-L-serine + (9Z)-octadecenoate + H(+). Its function is as follows. Hydrolyzes the ester bond of the acyl group attached at the sn-1 position of phosphatidylserines (phospholipase A1 activity) and 1-acyl-2-lysophosphatidylserines (lysophospholipase activity) in the pathway of phosphatidylserines acyl chain remodeling. Cleaves phosphatidylserines exposed on the outer leaflet of the plasma membrane of apoptotic cells producing 2-acyl-1-lysophosphatidylserines, which in turn enhance mast cell activation and histamine production. Has no activity toward other glycerophospholipids including phosphatidylcholines, phosphatidylethanolamines, phosphatidic acids or phosphatidylinositols, or glycerolipids such as triolein. This is Phospholipase A1 member A (PLA1A) from Bos taurus (Bovine).